A 261-amino-acid polypeptide reads, in one-letter code: Carnitinyl-CoA dehydratase (261 aa).

The active-site Nucleophile is the Glu-111. Catalysis depends on Glu-131, which acts as the Proton acceptor.

The protein belongs to the enoyl-CoA hydratase/isomerase family.

The catalysed reaction is (R)-carnitinyl-CoA = crotonobetainyl-CoA + H2O. Its pathway is amine and polyamine metabolism; carnitine metabolism. Functionally, catalyzes the reversible dehydration of L-carnitinyl-CoA to crotonobetainyl-CoA. This chain is Carnitinyl-CoA dehydratase, found in Citrobacter koseri (strain ATCC BAA-895 / CDC 4225-83 / SGSC4696).